The following is a 389-amino-acid chain: Naringenin-chalcone synthase (389 aa).

Residue Cys164 is part of the active site.

Belongs to the thiolase-like superfamily. Chalcone/stilbene synthases family. In terms of tissue distribution, expressed in glandular trichomes. Detected at low levels in female flowers, stems, seeds, leaves and roots.

The protein localises to the cytoplasm. The catalysed reaction is (E)-4-coumaroyl-CoA + 3 malonyl-CoA + 3 H(+) = 2',4,4',6'-tetrahydroxychalcone + 3 CO2 + 4 CoA. Chalcone synthase that can also use isovaleryl-CoA, isobutyryl-CoA or hexanoyl-CoA as substrates, but that is unable to produce olivetol or olivetolic acid. In Cannabis sativa (Hemp), this protein is Naringenin-chalcone synthase (CHS).